Consider the following 339-residue polypeptide: Hairy/enhancer-of-split related with YRPW motif protein 2 (339 aa).

Residues 1-52 (MKRPCEETTSESDLDETIDVGSENNYPGHATSSVMRSNSPTTTSQIMARKKR) form a disordered region. Acidic residues predominate over residues 8-18 (TTSESDLDETI). Residues 22-46 (SENNYPGHATSSVMRSNSPTTTSQI) show a composition bias toward polar residues. The interval 47–116 (MARKKRRGII…GGKGYFDAHA (70 aa)) is transcriptional repression and interaction with NCOR1 and SIN3A. Residues 48–103 (ARKKRRGIIEKRRRDRINNSLSELRRLVPTAFEKQGSAKLEKAEILQMTVDHLKML) form the bHLH domain. The Orange domain maps to 122–157 (MSIGFRECLTEVARYLSSVEGLDPSDPLRVRLVSHL). The interval 310–339 (SVSAASSPQQTSTGTNNKPYQPWGTEVGAF) is disordered. Residues 318–328 (QQTSTGTNNKP) are compositionally biased toward polar residues. Positions 329–332 (YQPW) match the YQPW motif motif.

This sequence belongs to the HEY family. As to quaternary structure, may self-associate. Interacts with ARNT. Interacts with GATA4, GATA6, HES1 and HEYL. Interacts with HDAC1, NCOR1 and SIN3A. Highly expressed in the aorta, lower expression detected in the heart, brain, kidney, lung, muscle, ovary and testis.

It is found in the nucleus. Its function is as follows. Transcriptional repressor which functions as a downstream effector of Notch signaling in cardiovascular development. Specifically required for the Notch-induced endocardial epithelial to mesenchymal transition, which is itself criticial for cardiac valve and septum development. May be required in conjunction with HEY1 to specify arterial cell fate or identity. Promotes maintenance of neuronal precursor cells and glial versus neuronal fate specification. Binds preferentially to the canonical E box sequence 5'-CACGTG-3'. Represses transcription by the cardiac transcriptional activators GATA4 and GATA6 and by the neuronal bHLH factors ASCL1/MASH1 and NEUROD4/MATH3. The protein is Hairy/enhancer-of-split related with YRPW motif protein 2 (Hey2) of Mus musculus (Mouse).